A 385-amino-acid polypeptide reads, in one-letter code: Eukaryotic translation initiation factor 3 subunit M (385 aa).

In terms of domain architecture, PCI spans 180–342 (NSELASKVMI…RKVHISSTMH (163 aa)).

Belongs to the eIF-3 subunit M family. In terms of assembly, component of the eukaryotic translation initiation factor 3 (eIF-3) complex.

The protein localises to the cytoplasm. Its function is as follows. Component of the eukaryotic translation initiation factor 3 (eIF-3) complex, which is involved in protein synthesis of a specialized repertoire of mRNAs and, together with other initiation factors, stimulates binding of mRNA and methionyl-tRNAi to the 40S ribosome. The eIF-3 complex specifically targets and initiates translation of a subset of mRNAs involved in cell proliferation. This is Eukaryotic translation initiation factor 3 subunit M from Anopheles gambiae (African malaria mosquito).